The primary structure comprises 75 residues: MEAEKQSDIKGTIAFDTHGNVIESTGVGSQRIEDIGDLSKVTLDAEGFAQVQGDSLLVHLYKRNDITLAVYTSAQ.

The sequence is that of Protein EGO2 from Saccharomyces cerevisiae (strain ATCC 204508 / S288c) (Baker's yeast).